Reading from the N-terminus, the 141-residue chain is Protein C19orf12 homolog (141 aa).

Residues 37–57 form a helical membrane-spanning segment; it reads GLAFAGGLIGGPLGIAVGGAV.

The protein belongs to the C19orf12 family.

The protein resides in the mitochondrion. It localises to the mitochondrion membrane. Its subcellular location is the endoplasmic reticulum. It is found in the cytoplasm. The protein localises to the cytosol. In Danio rerio (Zebrafish), this protein is Protein C19orf12 homolog.